A 472-amino-acid chain; its full sequence is Gamma-glutamylputrescine synthetase PuuA (472 aa).

Residues Pro35–Gly129 form the GS beta-grasp domain. The GS catalytic domain occupies Pro136–Ala472.

It belongs to the glutamine synthetase family. Dodecamer. Mg(2+) is required as a cofactor. Mn(2+) serves as cofactor.

It carries out the reaction putrescine + L-glutamate + ATP = gamma-L-glutamylputrescine + ADP + phosphate + H(+). It functions in the pathway amine and polyamine degradation; putrescine degradation; 4-aminobutanoate from putrescine: step 1/4. Involved in the breakdown of putrescine. Catalyzes the ATP-dependent gamma-glutamylation of putrescine, producing gamma-L-glutamylputrescine. Absolutely essential to utilize putrescine as both nitrogen and carbon sources and to decrease the toxicity of putrescine, which can lead to inhibition of cell growth and protein synthesis. In vitro is also able to use several diamines, and spermidine and spermine, instead of putrescine, but with a much lower activity, and cannot catalyze the gamma-glutamylation of ornithine or GABA. The sequence is that of Gamma-glutamylputrescine synthetase PuuA from Escherichia coli (strain K12).